The chain runs to 274 residues: Shikimate dehydrogenase (NADP(+)) (274 aa).

Residues 14–16 (SLS) and Thr-61 contribute to the shikimate site. Catalysis depends on Lys-65, which acts as the Proton acceptor. The shikimate site is built by Asn-85 and Asp-106. NADP(+) is bound by residues 130 to 134 (GAGGA), 153 to 158 (NRTAER), and Ala-217. Tyr-219 is a binding site for shikimate. Position 240 (Gly-240) interacts with NADP(+).

The protein belongs to the shikimate dehydrogenase family. Homodimer.

It catalyses the reaction shikimate + NADP(+) = 3-dehydroshikimate + NADPH + H(+). Its pathway is metabolic intermediate biosynthesis; chorismate biosynthesis; chorismate from D-erythrose 4-phosphate and phosphoenolpyruvate: step 4/7. In terms of biological role, involved in the biosynthesis of the chorismate, which leads to the biosynthesis of aromatic amino acids. Catalyzes the reversible NADPH linked reduction of 3-dehydroshikimate (DHSA) to yield shikimate (SA). The protein is Shikimate dehydrogenase (NADP(+)) of Halorubrum lacusprofundi (strain ATCC 49239 / DSM 5036 / JCM 8891 / ACAM 34).